Here is an 809-residue protein sequence, read N- to C-terminus: MGKKRIMFFASLLLITIFLSFSYAGITRESPLSIGKTLSSSNGVYELGFFSFNNSQNQYVGIWFKGIIPRVVVWVANREKPVTDSAANLTISSNGSLLLFNENHSVVWSIGETFASNGSRAELTDNGNLVVIDNNSGRTLWESFEHFGDTMLPFSNLMYNLATGEKRVLTSWKSHTDPSPGDFTVQITPQVPSQACTMRGSKTYWRSGPWAKTRFTGIPVMDDTYTSPFSLQQDTNGSGSFTYFERNFKLSYIMITSEGSLKIFQHNGMDWELNFEAPENSCDIYGFCGPFGICVMSVPPKCKCFKGFVPKSIEEWKRGNWTDGCVRHTELHCQGNTNGKTVNGFYHVANIKPPDFYEFASFVDAEGCYQICLHNCSCLAFAYINGIGCLMWNQDLMDAVQFSAGGEILSIRLASSELGGNKRNKIIVASIVSLSLFVILAFAAFCFLRYKVKHTVSAKISKIASKEAWNNDLEPQDVSGLKFFEMNTIQTATDNFSLSNKLGQGGFGSVYKGKLQDGKEIAVKRLSSSSGQGKEEFMNEIVLISKLQHKNLVRILGCCIEGEERLLVYEFLLNKSLDTFLFDSRKRLEIDWPKRFNIIEGIARGLHYLHRDSCLRVIHRDLKVSNILLDEKMNPKISDFGLARMYQGTEYQDNTRRVAGTLGYMAPEYAWTGMFSEKSDIYSFGVILLEIITGEKISRFSYGRQGKTLLAYAWESWCESGGIDLLDKDVADSCHPLEVERCVQIGLLCVQHQPADRPNTMELLSMLTTTSDLTSPKQPTFVVHTRDEESLSQGLITVNEMTQSVILGR.

Positions 1-24 (MGKKRIMFFASLLLITIFLSFSYA) are cleaved as a signal peptide. Residues 25–144 (GITRESPLSI…NSGRTLWESF (120 aa)) form the Bulb-type lectin domain. At 25–425 (GITRESPLSI…SELGGNKRNK (401 aa)) the chain is on the extracellular side. Residues Asn53, Asn88, Asn94, Asn103, Asn117, Asn134, and Asn236 are each glycosylated (N-linked (GlcNAc...) asparagine). One can recognise an EGF-like domain in the interval 278-314 (PENSCDIYGFCGPFGICVMSVPPKCKCFKGFVPKSIE). Cystine bridges form between Cys282-Cys294 and Cys288-Cys302. Asn320 and Asn375 each carry an N-linked (GlcNAc...) asparagine glycan. Residues 333–415 (CQGNTNGKTV…GEILSIRLAS (83 aa)) enclose the PAN domain. Intrachain disulfides connect Cys368/Cys389 and Cys372/Cys378. The chain crosses the membrane as a helical span at residues 426 to 446 (IIVASIVSLSLFVILAFAAFC). The Cytoplasmic segment spans residues 447–809 (FLRYKVKHTV…EMTQSVILGR (363 aa)). The region spanning 496 to 781 (FSLSNKLGQG…DLTSPKQPTF (286 aa)) is the Protein kinase domain. ATP-binding positions include 502–510 (LGQGGFGSV) and Lys524. Phosphoserine is present on residues Ser530 and Ser545. The interval 585–602 (RKRLEIDWPKRFNIIEGI) is caM-binding. Asp621 (proton acceptor) is an active-site residue. Residues Ser625 and Ser638 each carry the phosphoserine modification. Position 655 is a phosphothreonine (Thr655). Ser698 and Ser792 each carry phosphoserine.

Belongs to the protein kinase superfamily. Ser/Thr protein kinase family.

The protein localises to the cell membrane. The enzyme catalyses L-seryl-[protein] + ATP = O-phospho-L-seryl-[protein] + ADP + H(+). It catalyses the reaction L-threonyl-[protein] + ATP = O-phospho-L-threonyl-[protein] + ADP + H(+). The polypeptide is G-type lectin S-receptor-like serine/threonine-protein kinase At1g61480 (Arabidopsis thaliana (Mouse-ear cress)).